The following is a 354-amino-acid chain: Glycerol-1-phosphate dehydrogenase [NAD(P)+] (354 aa).

NAD(+)-binding positions include 103–107 and 125–128; these read GRSVD and TAAS. Aspartate 130 contacts substrate. Residue serine 134 coordinates NAD(+). Aspartate 176 lines the substrate pocket. Zn(2+) is bound by residues aspartate 176 and histidine 255. Residue histidine 259 coordinates substrate. A Zn(2+)-binding site is contributed by histidine 271.

The protein belongs to the glycerol-1-phosphate dehydrogenase family. In terms of assembly, homodimer. Requires Zn(2+) as cofactor.

It is found in the cytoplasm. It catalyses the reaction sn-glycerol 1-phosphate + NAD(+) = dihydroxyacetone phosphate + NADH + H(+). The catalysed reaction is sn-glycerol 1-phosphate + NADP(+) = dihydroxyacetone phosphate + NADPH + H(+). The protein operates within membrane lipid metabolism; glycerophospholipid metabolism. Its function is as follows. Catalyzes the NAD(P)H-dependent reduction of dihydroxyacetonephosphate (DHAP or glycerone phosphate) to glycerol 1-phosphate (G1P). The G1P thus generated is used as the glycerophosphate backbone of phospholipids in the cellular membranes of Archaea. The sequence is that of Glycerol-1-phosphate dehydrogenase [NAD(P)+] from Nitrosopumilus maritimus (strain SCM1).